The following is a 394-amino-acid chain: Acetyl-CoA acetyltransferase (394 aa).

The Acyl-thioester intermediate role is filled by Cys89. Catalysis depends on proton acceptor residues His350 and Cys380.

It belongs to the thiolase-like superfamily. Thiolase family. As to quaternary structure, homotetramer.

Its subcellular location is the cytoplasm. It carries out the reaction 2 acetyl-CoA = acetoacetyl-CoA + CoA. Its pathway is biopolymer metabolism; poly-(R)-3-hydroxybutanoate biosynthesis. It functions in the pathway metabolic intermediate biosynthesis; (R)-mevalonate biosynthesis; (R)-mevalonate from acetyl-CoA: step 1/3. The chain is Acetyl-CoA acetyltransferase from Thiocystis violacea.